The chain runs to 193 residues: Superoxide dismutase [Fe] (193 aa).

Fe cation contacts are provided by H27, H74, D157, and H161.

The protein belongs to the iron/manganese superoxide dismutase family. As to quaternary structure, homodimer. Fe cation serves as cofactor.

The enzyme catalyses 2 superoxide + 2 H(+) = H2O2 + O2. Destroys superoxide anion radicals which are normally produced within the cells and which are toxic to biological systems. In Salmonella typhimurium (strain LT2 / SGSC1412 / ATCC 700720), this protein is Superoxide dismutase [Fe] (sodB).